A 653-amino-acid polypeptide reads, in one-letter code: Endoglin (653 aa).

The signal sequence occupies residues Met-1 to Gly-24. Residues Leu-25–Gly-581 are Extracellular-facing. The segment at Glu-27–Thr-44 is OR1, N-terminal part. The segment at Glu-27–Ser-336 is required for interaction with GDF2. 7 cysteine pairs are disulfide-bonded: Cys-31-Cys-206, Cys-51-Cys-181, Cys-241-Cys-329, Cys-349-Cys-381, Cys-362-Cys-442, Cys-393-Cys-411, and Cys-493-Cys-549. The OR2 stretch occupies residues Ser-45–His-198. A glycan (N-linked (GlcNAc...) asparagine) is linked at Asn-57. An OR1, C-terminal part region spans residues Thr-199–Cys-329. Positions Lys-269–Phe-281 are essential for interaction with GDF2. Asn-306 is a glycosylation site (N-linked (GlcNAc...) asparagine). The ZP domain occupies Cys-362–Ala-512. Residues Leu-582–Trp-606 traverse the membrane as a helical segment. The Cytoplasmic segment spans residues Tyr-607–Ala-653. A compositionally biased stretch (low complexity) spans Ala-625–Ser-634. The tract at residues Ala-625 to Ala-653 is disordered. Over residues Thr-635 to Ala-653 the composition is skewed to polar residues. Phosphoserine; by TGFBR1 is present on residues Ser-641 and Ser-644.

In terms of assembly, homodimer; disulfide-linked. Forms a heteromeric complex with the signaling receptors for transforming growth factor-beta: TGFBR1 and/or TGFBR2. It is able to bind TGFB1 and TGFB2 with high affinity, but not TGFB3. Interacts with GDF2, forming a heterotetramer with a 2:2 stoichiometry. Interacts with ACVRL1. Can form a heteromeric complex with GDF2 and ACVRL1. Interacts with BMP10. Interacts with DYNLT4. Interacts with ARRB2.

It is found in the cell membrane. Functionally, vascular endothelium glycoprotein that plays an important role in the regulation of angiogenesis. Required for normal structure and integrity of adult vasculature. Regulates the migration of vascular endothelial cells. Required for normal extraembryonic angiogenesis and for embryonic heart development. May regulate endothelial cell shape changes in response to blood flow, which drive vascular remodeling and establishment of normal vascular morphology during angiogenesis. May play a role in the binding of endothelial cells to integrins. Acts as a TGF-beta coreceptor and is involved in the TGF-beta/BMP signaling cascade that ultimately leads to the activation of SMAD transcription factors. Required for GDF2/BMP9 signaling through SMAD1 in endothelial cells and modulates TGFB1 signaling through SMAD3. The chain is Endoglin (ENG) from Sus scrofa (Pig).